The sequence spans 105 residues: KARALKITEELDRTMEVPKPVRMHWTGCPNTCAQVQVADIGFMGCMTRDENKKVVEGVDIFIGGRVGADSHLGDLIHKGVPCKDVVPVVQELLIKHFGAIRKTNM.

Residues C28 and C32 each coordinate [4Fe-4S] cluster. Siroheme is bound at residue C32.

The protein belongs to the nitrite and sulfite reductase 4Fe-4S domain family. Monomer. The cofactor is siroheme. It depends on [4Fe-4S] cluster as a cofactor. As to expression, highest expression in roots and hypocotyls. Some expression in cotyledonary whorls.

It localises to the plastid. Its subcellular location is the chloroplast. The catalysed reaction is 6 oxidized [2Fe-2S]-[ferredoxin] + NH4(+) + 2 H2O = nitrite + 6 reduced [2Fe-2S]-[ferredoxin] + 8 H(+). It participates in nitrogen metabolism; nitrate reduction (assimilation). The sequence is that of Ferredoxin--nitrite reductase, chloroplastic (NIR) from Pinus sylvestris (Scotch pine).